The sequence spans 783 residues: Zinc finger protein 107 (783 aa).

The segment at 76–98 (FQCNKYVKVFDKFSNSNRYKRRH) adopts a C2H2-type 1; atypical zinc-finger fold. C2H2-type zinc fingers lie at residues 104–126 (FKCKECSKSFCVLSQLTQHRRIH), 132–154 (YKCEECGKAFNWFSTLTKHKRIH), and 160–182 (YKCEECGKAFNQSSQLTRHKIIH). Lys186 participates in a covalent cross-link: Glycyl lysine isopeptide (Lys-Gly) (interchain with G-Cter in SUMO2). The segment at 188 to 210 (NKCEECGKAFKQASHLTIHKIIH) adopts a C2H2-type 5 zinc-finger fold. The segment at 216–238 (YKYEECGKVFSQSSHLTTQKILH) adopts a C2H2-type 6; atypical zinc-finger fold. A C2H2-type 7 zinc finger spans residues 244 to 266 (YKCKECGKAFNLFSNLTNHKRIH). Residues 272–294 (YKCKECGRAFNISSNLNKQEKIH) form a C2H2-type 8; atypical zinc finger. The C2H2-type 9; atypical zinc-finger motif lies at 300–322 (NKCEECDKAFNRSLKLTAHKKIL). 2 consecutive C2H2-type zinc fingers follow at residues 328–350 (YKCEECGKVFNQFSTLTRHKIIH) and 356–378 (YKCKECGKAFNQSSNLTEHKKIH). The C2H2-type 12; atypical zinc-finger motif lies at 384–406 (YKCEECGKAFNQHSNLINHRKIY). 4 consecutive C2H2-type zinc fingers follow at residues 412 to 434 (YKCEECGKAFNRSSTLTRHKKIH), 440 to 462 (YKCEECDRAFSQSSNLTEHKKIH), 468 to 490 (YKCEECGKAFNRFSTLTKHKRIH), and 496 to 518 (YKCEECGKAFNQSYQLTRHKIVH). The segment at 524-546 (NKCEEFGKAFKQSSHRTIHKIIH) adopts a C2H2-type 17; atypical zinc-finger fold. A C2H2-type 18; atypical zinc finger spans residues 552–574 (YKCEEHGKVFNQSSNLTTQKIIH). Residues 580–602 (YKFEEHGKAFNLFSNITNHKIIY) form a C2H2-type 19; atypical zinc finger. C2H2-type zinc fingers lie at residues 608-630 (HKCEECGKAYNRFSNLTIHKRIH), 636-658 (YQCAECGKAFNCSSTLNRHKIIH), 664-686 (YKCKECGKAFNLSSTLTAHKKIH), 692-714 (YKCEECGKAFNQSSNLTTHKKIH), and 720-742 (YKCEECGKSFNQFSSLNIHKIIH). The C2H2-type 25; atypical zinc finger occupies 748-770 (YKCGDYGRAFNLSSNLTTHKKIH).

This sequence belongs to the krueppel C2H2-type zinc-finger protein family. As to expression, expressed in brain, heart, skeletal muscle, kidney and pancreas. Weakly expressed in aorta, liver and lung.

The protein resides in the nucleus. Functionally, may be involved in transcriptional regulation. The protein is Zinc finger protein 107 (ZNF107) of Homo sapiens (Human).